A 656-amino-acid chain; its full sequence is uncharacterized protein (656 aa).

Residues 623–656 (EIDIPGTPASIDPEWSRPPGSITDDHVFDAPLHR) are disordered. The segment covering 645-656 (TDDHVFDAPLHR) has biased composition (basic and acidic residues).

This is an uncharacterized protein from Mycobacterium tuberculosis (strain CDC 1551 / Oshkosh).